Consider the following 390-residue polypeptide: Chorismate synthase 1 (390 aa).

2 residues coordinate NADP(+): Arg-39 and Arg-45. Positions 95–117 are disordered; sequence EQEEKEMKRKVTKPRPGHADLNG. FMN is bound by residues 132–134, 253–254, Gly-298, 313–317, and Arg-339; these read RSS, NA, and KPIPT.

It belongs to the chorismate synthase family. Homotetramer. FMNH2 serves as cofactor.

The catalysed reaction is 5-O-(1-carboxyvinyl)-3-phosphoshikimate = chorismate + phosphate. The protein operates within metabolic intermediate biosynthesis; chorismate biosynthesis; chorismate from D-erythrose 4-phosphate and phosphoenolpyruvate: step 7/7. Functionally, catalyzes the anti-1,4-elimination of the C-3 phosphate and the C-6 proR hydrogen from 5-enolpyruvylshikimate-3-phosphate (EPSP) to yield chorismate, which is the branch point compound that serves as the starting substrate for the three terminal pathways of aromatic amino acid biosynthesis. This reaction introduces a second double bond into the aromatic ring system. This is Chorismate synthase 1 from Bacillus thuringiensis (strain Al Hakam).